A 156-amino-acid polypeptide reads, in one-letter code: Transcriptional repressor NrdR (156 aa).

Residues 3–34 (CPFCQHDDTQVLDTRISEEGDSIRRRRRCVSC) fold into a zinc finger. The 91-residue stretch at 49–139 (PVIVKKNGSR…VYKSFEDVAE (91 aa)) folds into the ATP-cone domain.

The protein belongs to the NrdR family. The cofactor is Zn(2+).

Its function is as follows. Negatively regulates transcription of bacterial ribonucleotide reductase nrd genes and operons by binding to NrdR-boxes. The chain is Transcriptional repressor NrdR from Herminiimonas arsenicoxydans.